A 186-amino-acid chain; its full sequence is Peptidyl-tRNA hydrolase (186 aa).

TRNA is bound at residue Tyr16. Residue His21 is the Proton acceptor of the active site. TRNA contacts are provided by Tyr66, Asn68, and Asn114.

It belongs to the PTH family. In terms of assembly, monomer.

It localises to the cytoplasm. The catalysed reaction is an N-acyl-L-alpha-aminoacyl-tRNA + H2O = an N-acyl-L-amino acid + a tRNA + H(+). Hydrolyzes ribosome-free peptidyl-tRNAs (with 1 or more amino acids incorporated), which drop off the ribosome during protein synthesis, or as a result of ribosome stalling. Its function is as follows. Catalyzes the release of premature peptidyl moieties from peptidyl-tRNA molecules trapped in stalled 50S ribosomal subunits, and thus maintains levels of free tRNAs and 50S ribosomes. This Ureaplasma parvum serovar 3 (strain ATCC 700970) protein is Peptidyl-tRNA hydrolase.